A 378-amino-acid polypeptide reads, in one-letter code: Trans-enoyl reductase poxP (378 aa).

62–65 is a binding site for NADP(+); that stretch reads CDWK. 151–158 is a substrate binding site; that stretch reads SVFATLWI. NADP(+) is bound by residues 187–190, 210–213, Y228, and 275–276; these read STST, SPHN, and LE. Residue 295–299 participates in substrate binding; it reads GLAAS. An NADP(+)-binding site is contributed by 364–365; it reads TS.

Belongs to the zinc-containing alcohol dehydrogenase family. As to quaternary structure, monomer.

Its pathway is secondary metabolite biosynthesis. Its function is as follows. Trans-enoyl reductase; part of the gene cluster that mediates the biosynthesis of oxaleimides, cytotoxic compounds containing an unusual disubstituted succinimide moiety. The first step of the pathway is provided by the HR-PKS poxF that serves in a new mode of collaborative biosynthesis with the PKS-NRPS poxE, by providing the olefin containing amino acid substrate via the synthesis of an ACP-bound dec-4-enoate. The cytochrome P450 monooxygenase poxM-catalyzed oxidation at the alpha-position creates the enzyme-bound 2-hydroxydec-4-enoyl-ACP thioester, which may be prone to spontaneous hydrolysis to yield 2-hydroxydec-4-enoic acid due to increased electrophilicity of the carbonyl. 2-hydroxydec-4-enoic acid can then be further oxidized by poxM to yield the alpha-ketoacid 2-oxodec-4-enoicacid, which is reductively aminated by the aminotransferase poxL to yield (S,E)-2-aminodec-4-enoic acid. The Hybrid PKS-NRPS synthetase poxE then performs condensation between the octaketide product of its PKS modules and the amino group of (S,E)-2-aminodec-4-enoic acid which is activated and incorporated by the adenylation domain. The resulting aminoacyl product can be cyclized by the Diels-Alderase PoxQ and reductively released by the reductive (R) domain of poxE to yield an aldehyde intermediate. The released aldehyde is then substrate for a Knoevenagel condensation by the hydrolyase poxO followed by an oxidation at the 5-position of the pyrrolidone ring. The presence of the olefin from the amino acid building block allows for migration of the substituted allyl group to occur. This allylic transposition reaction takes place in a conjugate addition, semipinacol-like fashion to yield a succinimide intermediate. Iterative two-electron oxidations of the C7 methyl of the succinimide intermediate to the carboxylic acid can be catalyzed by one of two remaining cytochrome P450 monooxygenasess poxC or poxD to yield oxaleimide A. Subsequent oxidation yields the maleimide scaffold oxaleimide I. Both oxaleimide A and oxaleimide I can undergo oxidative modifications in the decalin ring to yield the series of products oxaleimides B to H. The chain is Trans-enoyl reductase poxP from Penicillium oxalicum.